The chain runs to 119 residues: Non-structural protein 3b (119 aa).

Positions 3 to 79 (YVSLLNQVWQ…AARKVCLRLQ (77 aa)) constitute a DRBM domain.

In terms of assembly, interacts with host RUNX1 isoform b.

It localises to the host nucleus. The protein localises to the host nucleolus. It is found in the host mitochondrion. In terms of biological role, induces host cell G0/G1 arrest and apoptosis. The polypeptide is Non-structural protein 3b (Pipistrellus abramus (Japanese pipistrelle)).